We begin with the raw amino-acid sequence, 320 residues long: 4-diphosphocytidyl-2-C-methyl-D-erythritol kinase (320 aa).

The active site involves lysine 20. 112-122 (PVAGGMGGGSA) is an ATP binding site. Aspartate 154 is an active-site residue.

The protein belongs to the GHMP kinase family. IspE subfamily.

The enzyme catalyses 4-CDP-2-C-methyl-D-erythritol + ATP = 4-CDP-2-C-methyl-D-erythritol 2-phosphate + ADP + H(+). The protein operates within isoprenoid biosynthesis; isopentenyl diphosphate biosynthesis via DXP pathway; isopentenyl diphosphate from 1-deoxy-D-xylulose 5-phosphate: step 3/6. In terms of biological role, catalyzes the phosphorylation of the position 2 hydroxy group of 4-diphosphocytidyl-2C-methyl-D-erythritol. In Arthrobacter sp. (strain FB24), this protein is 4-diphosphocytidyl-2-C-methyl-D-erythritol kinase.